The chain runs to 179 residues: Large ribosomal subunit protein uL5 (179 aa).

It belongs to the universal ribosomal protein uL5 family. Part of the 50S ribosomal subunit; part of the 5S rRNA/L5/L18/L25 subcomplex. Contacts the 5S rRNA and the P site tRNA. Forms a bridge to the 30S subunit in the 70S ribosome.

In terms of biological role, this is one of the proteins that bind and probably mediate the attachment of the 5S RNA into the large ribosomal subunit, where it forms part of the central protuberance. In the 70S ribosome it contacts protein S13 of the 30S subunit (bridge B1b), connecting the 2 subunits; this bridge is implicated in subunit movement. Contacts the P site tRNA; the 5S rRNA and some of its associated proteins might help stabilize positioning of ribosome-bound tRNAs. This chain is Large ribosomal subunit protein uL5, found in Prochlorococcus marinus (strain MIT 9312).